Here is a 136-residue protein sequence, read N- to C-terminus: Protein YebF (136 aa).

A signal peptide spans 1 to 23 (MKKTGLALVLATILLGMMGSVHA). Residues 30 to 117 (KVPACIGLNQ…KSGTMTYTGL (88 aa)) form the YebF/Cmi domain. Cys34 and Cys107 form a disulfide bridge. The disordered stretch occupies residues 117-136 (LNAQTRPDPQIGLNSQAGPK).

Belongs to the YebF family.

Its subcellular location is the secreted. This is Protein YebF from Yersinia pseudotuberculosis serotype O:1b (strain IP 31758).